We begin with the raw amino-acid sequence, 157 residues long: MNINLTMFGQLIMFAMFTWFCMKFIWPPIVMAMEERQKRIEGGLLAAERGRFEKAEAQIKAKEIINQSKSLAAEIIANATRQALNMVEDAKYIALKEAGKVKEQAQAQLEQDTICVRNELKNQVSDLVIQGVNAVLDKEVDVKLHQQMLGKLSESLS.

A helical transmembrane segment spans residues 11–31 (LIMFAMFTWFCMKFIWPPIVM).

Belongs to the ATPase B chain family. F-type ATPases have 2 components, F(1) - the catalytic core - and F(0) - the membrane proton channel. F(1) has five subunits: alpha(3), beta(3), gamma(1), delta(1), epsilon(1). F(0) has three main subunits: a(1), b(2) and c(10-14). The alpha and beta chains form an alternating ring which encloses part of the gamma chain. F(1) is attached to F(0) by a central stalk formed by the gamma and epsilon chains, while a peripheral stalk is formed by the delta and b chains.

The protein resides in the cell inner membrane. F(1)F(0) ATP synthase produces ATP from ADP in the presence of a proton or sodium gradient. F-type ATPases consist of two structural domains, F(1) containing the extramembraneous catalytic core and F(0) containing the membrane proton channel, linked together by a central stalk and a peripheral stalk. During catalysis, ATP synthesis in the catalytic domain of F(1) is coupled via a rotary mechanism of the central stalk subunits to proton translocation. In terms of biological role, component of the F(0) channel, it forms part of the peripheral stalk, linking F(1) to F(0). The protein is ATP synthase subunit b of Vesicomyosocius okutanii subsp. Calyptogena okutanii (strain HA).